We begin with the raw amino-acid sequence, 314 residues long: Short chain dehydrogenase atnD (314 aa).

NADP(+) is bound by residues leucine 41, lysine 66, aspartate 90, and asparagine 116. Residues serine 171 and tyrosine 204 each act as proton donor in the active site. NADP(+) is bound by residues tyrosine 204 and lysine 208. Residue lysine 208 is the Lowers pKa of active site Tyr of the active site.

It belongs to the short-chain dehydrogenases/reductases (SDR) family.

The protein operates within secondary metabolite biosynthesis. Short chain dehydrogenase; part of the gene cluster that mediates the biosynthesis of aspercryptins, linear lipopeptides built from six amino acids including 2 highly unusual and nonproteogenic amino acids, 2-amino-octanoic acid (2aoa) and 2-amino-dodecanol (2adol). The core structure of aspercryptins is as follows: Ser/Ala-Thr-Ile/Val-2aoa-Asn-2adol. The first step of aspercryptin biosynthesis is the generation of the fatty acid precursors, octanoic and dodecanoic acids, by the FAS subunits atnF and atnM. The fatty acid precursors are likely transformed into the corresponding alpha-amino fatty acids in three steps. First, they are hydroxylated by the cytochrome P450 monooxygenase atnE, then oxidized to the corresponding alpha-keto acids by the NAD(P)-dependent oxidoreductase atnD, and finally converted to the alpha-amino fatty acids by the PLP-dependent aminotransferases atnH or atnJ. the alpha-amino fatty acids, 2-amino-octanoic and 2-amino-dodecanoic acids, are recognized, activated, and covalently tethered to the NRPS atnA by its fourth and sixth adenylation domains. The second module of atnA is the Thr module and contains an epimerase (E) domain responsible for the epimerization of Thr to D-allo-Thr. Additionally, despite atnA having only one epimerase domain, the first amino acid of aspercryptin A1 is D-Ser, suggesting that serine is either loaded directly as D-Ser on the first module or that the epimerase domain in the threonine module epimerizes both L-Ser and L-Thr. After condensation of the hexapeptide of aspercryptin, the C-terminal reductase (TE) domain might be involved in the reductive release and production of the aldehyde hexapeptide. Further reduction would generate aspercryptins. The variety of aspercryptins produced reflects the flexibility of the atnA NRPS, allowing incorporation of alanine instead of serine, valine for isoleucine, and a C10 fatty amino alcohol instead of the C12 version. AtnB seems to be involved in the selectivity for Ile versus Val by the third module. Moreover, type B, C and D aspercryptins have an additional N-terminal cichorine, acetyl and propionyl group respectively. This is Short chain dehydrogenase atnD from Emericella nidulans (strain FGSC A4 / ATCC 38163 / CBS 112.46 / NRRL 194 / M139) (Aspergillus nidulans).